The following is a 229-amino-acid chain: Large ribosomal subunit protein uL1 (229 aa).

Belongs to the universal ribosomal protein uL1 family. As to quaternary structure, part of the 50S ribosomal subunit.

Binds directly to 23S rRNA. The L1 stalk is quite mobile in the ribosome, and is involved in E site tRNA release. Its function is as follows. Protein L1 is also a translational repressor protein, it controls the translation of the L11 operon by binding to its mRNA. In Phenylobacterium zucineum (strain HLK1), this protein is Large ribosomal subunit protein uL1.